The following is a 216-amino-acid chain: CsgBAC operon transcriptional regulatory protein (216 aa).

Residues 149 to 214 form the HTH luxR-type domain; it reads NSTESALLTH…QAVSWANDNL (66 aa). A DNA-binding region (H-T-H motif) is located at residues 173-192; sequence NNEIARSLFISENTVKTHLY.

The protein resides in the cell inner membrane. Functionally, the master regulator for adhesive curli fimbriae expression; necessary for transcription of the csgBAC/ymdA operon. Plays a positive role in biofilm formation. May have the capability to respond to starvation and/or high cell density by activating csgBA transcription. Low-level constitutive expression confers an adherent curli fimbriae-expressing phenotype, up-regulates 10 genes and down-regulates 14 others. The sequence is that of CsgBAC operon transcriptional regulatory protein (csgD) from Escherichia coli (strain K12).